The primary structure comprises 289 residues: Probable ABC transporter permease protein BRA0749/BS1330_II0742 (289 aa).

Transmembrane regions (helical) follow at residues 9–29 (FLIL…VVHL), 70–90 (VWTV…AIIL), 99–119 (VARV…AIVW), 144–166 (IQWL…LVTV), 213–233 (IAIV…WVMT), and 260–280 (EASA…VIYI). The 215-residue stretch at 65-279 (LWRTAVWTVA…AILLVFTVIY (215 aa)) folds into the ABC transmembrane type-1 domain.

This sequence belongs to the binding-protein-dependent transport system permease family. The complex is composed of two ATP-binding proteins (BRA0745), two transmembrane proteins (BRA0749) and a solute-binding protein (BRA0748).

The protein localises to the cell inner membrane. Probably part of an ABC transporter complex. Probably responsible for the translocation of the substrate across the membrane. This Brucella suis biovar 1 (strain 1330) protein is Probable ABC transporter permease protein BRA0749/BS1330_II0742.